The sequence spans 303 residues: Lysosomal amino acid transporter 1 homolog (303 aa).

Topologically, residues 1-38 (MAEGLRAPPPPGNGSECPDGARWVLRLLGECARDGRDV) are lumenal. Asn-13 carries N-linked (GlcNAc...) asparagine glycosylation. The PQ-loop 1 domain maps to 36 to 102 (RDVGSALLGL…LANQLPLQVY (67 aa)). The chain crosses the membrane as a helical span at residues 39–59 (GSALLGLLSIGCFAAAALPQF). The Cytoplasmic portion of the chain corresponds to 60–73 (YQACKTGIMDRALS). The helical transmembrane segment at 74-94 (IYFLLGWLGGDLLNLIGSFLA) threads the bilayer. The Lumenal portion of the chain corresponds to 95–96 (NQ). A helical transmembrane segment spans residues 97–117 (LPLQVYTAVYYVLADLVMLSL). Over 118–131 (YGYYKAKNWGTGAT) the chain is Cytoplasmic. A helical transmembrane segment spans residues 132 to 152 (ASINAACLFCLLGTATTLTVL). The Lumenal segment spans residues 153–182 (SHDTGPAPNPAAFGGRSLLSLGLEGPGPEP). Residues 183–203 (ISKTEIIGFAIGSISSVLYLC) form a helical membrane-spanning segment. Residues 186–251 (TEIIGFAIGS…LKNPEPGQSE (66 aa)) form the PQ-loop 2 domain. At 204–220 (SRLPQIYTNYRRKSTAG) the chain is on the cytoplasmic side. The chain crosses the membrane as a helical span at residues 221-241 (VSFLLFALVMLGNLLYGTSVL). Residues 242–260 (LKNPEPGQSEGDYILHHLP) are Lumenal-facing. A helical transmembrane segment spans residues 261 to 281 (WLIGSLGVLSLDVIISFQFLA). At 282 to 303 (YRTGQPSAGEEREALLAEHGDS) the chain is on the cytoplasmic side. Positions 296-297 (LL) match the Di-leucine motif motif.

Belongs to the laat-1 family.

Its subcellular location is the lysosome membrane. Its function is as follows. Amino acid transporter that specifically mediates the pH-dependent export of the cationic amino acids arginine, histidine and lysine from lysosomes. The sequence is that of Lysosomal amino acid transporter 1 homolog (SLC66A1) from Gallus gallus (Chicken).